Reading from the N-terminus, the 277-residue chain is Small ribosomal subunit protein uS2 (277 aa).

The disordered stretch occupies residues 247-277 (LSAFESSQDDESDEENREEDLLAKKFDGEAN). Positions 253–264 (SQDDESDEENRE) are enriched in acidic residues. Over residues 265 to 277 (EDLLAKKFDGEAN) the composition is skewed to basic and acidic residues.

The protein belongs to the universal ribosomal protein uS2 family.

The chain is Small ribosomal subunit protein uS2 (rpsB) from Chlamydia pneumoniae (Chlamydophila pneumoniae).